Reading from the N-terminus, the 360-residue chain is Membrane-bound lytic murein transglycosylase C (360 aa).

An N-terminal signal peptide occupies residues Met1–Ser16. Cys17 carries the N-palmitoyl cysteine lipid modification. Cys17 carries the S-diacylglycerol cysteine lipid modification.

The protein belongs to the transglycosylase Slt family.

It localises to the cell outer membrane. It carries out the reaction Exolytic cleavage of the (1-&gt;4)-beta-glycosidic linkage between N-acetylmuramic acid (MurNAc) and N-acetylglucosamine (GlcNAc) residues in peptidoglycan, from either the reducing or the non-reducing ends of the peptidoglycan chains, with concomitant formation of a 1,6-anhydrobond in the MurNAc residue.. Murein-degrading enzyme. May play a role in recycling of muropeptides during cell elongation and/or cell division. The sequence is that of Membrane-bound lytic murein transglycosylase C from Salmonella paratyphi A (strain ATCC 9150 / SARB42).